Reading from the N-terminus, the 185-residue chain is Large ribosomal subunit protein bL17 (185 aa).

Belongs to the bacterial ribosomal protein bL17 family. Part of the 50S ribosomal subunit. Contacts protein L32.

The chain is Large ribosomal subunit protein bL17 from Rhodococcus erythropolis (strain PR4 / NBRC 100887).